Reading from the N-terminus, the 224-residue chain is Testis-expressed protein 30 (224 aa).

In Bos taurus (Bovine), this protein is Testis-expressed protein 30 (TEX30).